A 240-amino-acid polypeptide reads, in one-letter code: UDP-2,3-diacylglucosamine hydrolase (240 aa).

Mn(2+) contacts are provided by Asp7, His9, Asp40, Asn78, and His113. 78–79 provides a ligand contact to substrate; sequence NR. Substrate is bound by residues Asp121, Ser159, Thr163, Lys166, and His194. Residues His194 and His196 each contribute to the Mn(2+) site.

This sequence belongs to the LpxH family. Mn(2+) is required as a cofactor.

The protein localises to the cell inner membrane. The catalysed reaction is UDP-2-N,3-O-bis[(3R)-3-hydroxytetradecanoyl]-alpha-D-glucosamine + H2O = 2-N,3-O-bis[(3R)-3-hydroxytetradecanoyl]-alpha-D-glucosaminyl 1-phosphate + UMP + 2 H(+). Its pathway is glycolipid biosynthesis; lipid IV(A) biosynthesis; lipid IV(A) from (3R)-3-hydroxytetradecanoyl-[acyl-carrier-protein] and UDP-N-acetyl-alpha-D-glucosamine: step 4/6. Functionally, hydrolyzes the pyrophosphate bond of UDP-2,3-diacylglucosamine to yield 2,3-diacylglucosamine 1-phosphate (lipid X) and UMP by catalyzing the attack of water at the alpha-P atom. Involved in the biosynthesis of lipid A, a phosphorylated glycolipid that anchors the lipopolysaccharide to the outer membrane of the cell. The polypeptide is UDP-2,3-diacylglucosamine hydrolase (Stutzerimonas stutzeri (strain A1501) (Pseudomonas stutzeri)).